The primary structure comprises 184 residues: Probable cobalt-precorrin-6B C(15)-methyltransferase (decarboxylating) (184 aa).

Residues threonine 12, 36–40, aspartate 59, and alanine 87 each bind S-adenosyl-L-methionine; that span reads GCGTG.

It belongs to the methyltransferase superfamily. Archaeal-type CbiT family.

It catalyses the reaction Co-precorrin-6B + S-adenosyl-L-methionine = Co-precorrin-7 + S-adenosyl-L-homocysteine + CO2. The protein operates within cofactor biosynthesis; adenosylcobalamin biosynthesis; cob(II)yrinate a,c-diamide from sirohydrochlorin (anaerobic route): step 8/10. Catalyzes the methylation of C-15 in cobalt-precorrin-6B followed by the decarboxylation of C-12 to form cobalt-precorrin-7. The sequence is that of Probable cobalt-precorrin-6B C(15)-methyltransferase (decarboxylating) from Methanosarcina mazei (strain ATCC BAA-159 / DSM 3647 / Goe1 / Go1 / JCM 11833 / OCM 88) (Methanosarcina frisia).